Consider the following 215-residue polypeptide: Sperm acrosome membrane-associated protein 3 (215 aa).

The Cytoplasmic segment spans residues Met1–Arg63. A helical; Signal-anchor for type II membrane protein membrane pass occupies residues Trp64 to Ser84. At Ser85 to Phe215 the chain is on the extracellular side. A C-type lysozyme domain is found at Lys88–Phe215. 4 disulfide bridges follow: Cys93–Cys213, Cys117–Cys201, Cys151–Cys166, and Cys162–Cys180.

The protein belongs to the glycosyl hydrolase 22 family. In terms of assembly, interacts with ASTL. The processed form derives from the membrane form by proteolytic processing. The processed form is expressed in sperm (at protein level). Expressed in testis, epididymis and placenta.

Its subcellular location is the cytoplasmic vesicle. The protein localises to the secretory vesicle. It is found in the acrosome membrane. The protein resides in the secreted. In terms of biological role, sperm surface membrane protein that may be involved in sperm-egg plasma membrane adhesion and fusion during fertilization. It could be a potential receptor for the egg oligosaccharide residue N-acetylglucosamine, which is present in the extracellular matrix over the egg plasma membrane. The processed form has no detectable bacteriolytic activity in vitro. In Homo sapiens (Human), this protein is Sperm acrosome membrane-associated protein 3 (SPACA3).